A 394-amino-acid polypeptide reads, in one-letter code: D-mannose isomerase (394 aa).

Catalysis depends on proton donor/acceptor residues His-251 and His-380.

It belongs to the N-acylglucosamine 2-epimerase family. In terms of assembly, monomer.

It catalyses the reaction D-mannose = D-fructose. It carries out the reaction D-lyxose = D-xylulose. Functionally, catalyzes the reversible isomerization of D-mannose to D-fructose. Can also isomerize D-lyxose, with lower efficiency. In longer reaction with a higher concentration of enzyme, it can isomerize 4-OH D-mannose derivatives (D-talose and 4-O-monosaccharyl-D-mannose). Cannot use D-glucose. The sequence is that of D-mannose isomerase from Marinomonas mediterranea (strain ATCC 700492 / JCM 21426 / NBRC 103028 / MMB-1).